We begin with the raw amino-acid sequence, 392 residues long: Queuine tRNA-ribosyltransferase (392 aa).

The active-site Proton acceptor is the Asp-93. Substrate-binding positions include 93–97, Asp-147, Gln-189, and Gly-216; that span reads DSGGY. Residues 247–253 are RNA binding; sequence GVGAPED. Asp-266 functions as the Nucleophile in the catalytic mechanism. Residues 271–275 form an RNA binding; important for wobble base 34 recognition region; the sequence is TRVAR. Cys-304, Cys-306, Cys-309, and His-335 together coordinate Zn(2+).

This sequence belongs to the queuine tRNA-ribosyltransferase family. In terms of assembly, homodimer. Within each dimer, one monomer is responsible for RNA recognition and catalysis, while the other monomer binds to the replacement base PreQ1. It depends on Zn(2+) as a cofactor.

The catalysed reaction is 7-aminomethyl-7-carbaguanine + guanosine(34) in tRNA = 7-aminomethyl-7-carbaguanosine(34) in tRNA + guanine. Its pathway is tRNA modification; tRNA-queuosine biosynthesis. Its function is as follows. Catalyzes the base-exchange of a guanine (G) residue with the queuine precursor 7-aminomethyl-7-deazaguanine (PreQ1) at position 34 (anticodon wobble position) in tRNAs with GU(N) anticodons (tRNA-Asp, -Asn, -His and -Tyr). Catalysis occurs through a double-displacement mechanism. The nucleophile active site attacks the C1' of nucleotide 34 to detach the guanine base from the RNA, forming a covalent enzyme-RNA intermediate. The proton acceptor active site deprotonates the incoming PreQ1, allowing a nucleophilic attack on the C1' of the ribose to form the product. After dissociation, two additional enzymatic reactions on the tRNA convert PreQ1 to queuine (Q), resulting in the hypermodified nucleoside queuosine (7-(((4,5-cis-dihydroxy-2-cyclopenten-1-yl)amino)methyl)-7-deazaguanosine). The polypeptide is Queuine tRNA-ribosyltransferase (Dehalococcoides mccartyi (strain CBDB1)).